Consider the following 550-residue polypeptide: MISDNIKKGVIRSPNRALLKACGYTDEDMEKPFIGVVNSFTDVVPGHIHLRTLAEAVKNGVYANGGTPFEFNTIGICDGIAMGHEGMKYSLPSREIIADAVESMARAHGFDGLVLIPTCDKIVPGMIMGALRLNIPFIVVTGGPMLPGEFQGKKYELISLFEGVGQYQVGKISEEELKCIEDCACSGAGSCAGLYTANSMACLTEALGLSLPMCATTHAVDAQKVRIAKKSGSKIVDLVKQDIKPKDILTKEAFENAILVDLALGGSTNTTLHIPAIANEIENKFITLDDFDRLSDEVPHIASIKPGGEHFMIDLHNAGGIPAVFNVLKEKIRDTNTVSGKTTLEIAKEVKYINYDVIRKTEAPVHETAGLRVLKGNIAPNGCVVKIGAVNPKMYKHEGPAKVFNSEDDAISAILGGKIVSGDVIVIRYEGPSGGPGMREMLSPTSAICGMGLDDSVALITDGRFSGGSRGPCIGHISPEAMAGGLIAVINDGDTIKIDMIGKKINVELNNSEIENRLKSLKIPEPKVKTGYLSRYSRLVSSADEGAVLK.

D78 provides a ligand contact to Mg(2+). [2Fe-2S] cluster is bound at residue C119. Positions 120 and 121 each coordinate Mg(2+). K121 is modified (N6-carboxylysine). C191 contributes to the [2Fe-2S] cluster binding site. E440 is a Mg(2+) binding site. S466 functions as the Proton acceptor in the catalytic mechanism.

This sequence belongs to the IlvD/Edd family. Homodimer. It depends on [2Fe-2S] cluster as a cofactor. The cofactor is Mg(2+).

The catalysed reaction is (2R)-2,3-dihydroxy-3-methylbutanoate = 3-methyl-2-oxobutanoate + H2O. The enzyme catalyses (2R,3R)-2,3-dihydroxy-3-methylpentanoate = (S)-3-methyl-2-oxopentanoate + H2O. The protein operates within amino-acid biosynthesis; L-isoleucine biosynthesis; L-isoleucine from 2-oxobutanoate: step 3/4. Its pathway is amino-acid biosynthesis; L-valine biosynthesis; L-valine from pyruvate: step 3/4. Functionally, functions in the biosynthesis of branched-chain amino acids. Catalyzes the dehydration of (2R,3R)-2,3-dihydroxy-3-methylpentanoate (2,3-dihydroxy-3-methylvalerate) into 2-oxo-3-methylpentanoate (2-oxo-3-methylvalerate) and of (2R)-2,3-dihydroxy-3-methylbutanoate (2,3-dihydroxyisovalerate) into 2-oxo-3-methylbutanoate (2-oxoisovalerate), the penultimate precursor to L-isoleucine and L-valine, respectively. This is Dihydroxy-acid dehydratase from Methanococcus vannielii (strain ATCC 35089 / DSM 1224 / JCM 13029 / OCM 148 / SB).